Here is a 244-residue protein sequence, read N- to C-terminus: Flavin-dependent thymidylate synthase (244 aa).

Residues Ile17–Gln239 form the ThyX domain. FAD contacts are provided by residues Ser68, Arg91–Arg93, and Glu99. Residues Glu88 to Arg91, Glu99 to Arg103, and Arg171 each bind dUMP. A ThyX motif motif is present at residues Arg91 to Ser101. FAD contacts are provided by residues Asn187 to Arg189 and Asn193. Residue Arg198 participates in dUMP binding. The active-site Involved in ionization of N3 of dUMP, leading to its activation is Arg198.

The protein belongs to the thymidylate synthase ThyX family. Homotetramer. FAD is required as a cofactor.

It catalyses the reaction dUMP + (6R)-5,10-methylene-5,6,7,8-tetrahydrofolate + NADPH + H(+) = dTMP + (6S)-5,6,7,8-tetrahydrofolate + NADP(+). It functions in the pathway pyrimidine metabolism; dTTP biosynthesis. Functionally, catalyzes the reductive methylation of 2'-deoxyuridine-5'-monophosphate (dUMP) to 2'-deoxythymidine-5'-monophosphate (dTMP) while utilizing 5,10-methylenetetrahydrofolate (mTHF) as the methyl donor, and NADPH and FADH(2) as the reductant. This Tropheryma whipplei (strain Twist) (Whipple's bacillus) protein is Flavin-dependent thymidylate synthase.